Here is a 637-residue protein sequence, read N- to C-terminus: Clathrin coat assembly protein AP180A (637 aa).

Residues 1-126 form the ENTH domain; sequence MTTYFKLVKG…REFGKIKKDY (126 aa). A disordered region spans residues 555-637; sequence TQNHLQQQQQ…YANNLNLIDM (83 aa). Low complexity-rich tracts occupy residues 560 to 579 and 600 to 622; these read QQQQ…QPQQ and QPQN…TQQP. The segment at 587–637 is clathrin-binding; it reads AGANPVTNITGTVQPQNFPFYPQQQPQPEQSQTQQPVLGNQYANNLNLIDM. Positions 623–637 are enriched in polar residues; that stretch reads VLGNQYANNLNLIDM.

The protein belongs to the AP180 family. In terms of assembly, interacts with PAN1 and the clathrin heavy and light chains CHC1 and CLC1.

It localises to the bud. Its subcellular location is the bud neck. The protein resides in the cell membrane. The protein localises to the cytoplasm. Functionally, involved in endocytosis and clathrin cage assembly. This is Clathrin coat assembly protein AP180A (YAP1801) from Saccharomyces cerevisiae (strain ATCC 204508 / S288c) (Baker's yeast).